The following is a 539-amino-acid chain: Polyol transporter 5 (539 aa).

Residues 1–11 show a composition bias toward polar residues; that stretch reads MTGATPENRTA. The segment at 1–24 is disordered; sequence MTGATPENRTAPSPPPVKHVPESV. 12 helical membrane-spanning segments follow: residues 37-57, 73-93, 104-124, 127-147, 165-185, 196-216, 296-316, 333-353, 364-384, 391-411, 433-453, and 463-483; these read FACA…IGVM, LQIG…SCAA, YTIV…GLSP, AFLM…LMIA, SFPE…NLAF, LMLG…LAMP, IAAI…VVLF, LLAT…ATFL, LTSV…LTII, VMWA…TFSI, GSSM…ISFL, and GAFY…YTFL. 2 stretches are compositionally biased toward basic and acidic residues: residues 503 to 514 and 530 to 539; these read WRDSKSKPKGNP and QWKEGDTQSS. The tract at residues 503 to 539 is disordered; that stretch reads WRDSKSKPKGNPEKTVPNPEVEIGSNKQWKEGDTQSS.

Belongs to the major facilitator superfamily. Sugar transporter (TC 2.A.1.1) family. Highly expressed in roots. Expressed in vascular tissue of leaves, sepals and siliques.

It is found in the cell membrane. Functionally, plasma membrane broad-spectrum sugar-proton symporter. Mediates the uptake of linear polyols such as sorbitol, xylitol, erythritol or glycerol. Can transport the cyclic polyol myo-inositol and different hexoses, pentoses (including ribose), tetroses and sugar alcohols. This chain is Polyol transporter 5 (PLT5), found in Arabidopsis thaliana (Mouse-ear cress).